A 461-amino-acid chain; its full sequence is CASP-like protein 4U1 (461 aa).

A disordered region spans residues 1 to 239 (MASTPRTPAP…RAAETKLPLS (239 aa)). Residues 1 to 314 (MASTPRTPAP…AAVAVGERRE (314 aa)) lie on the Cytoplasmic side of the membrane. The segment covering 7–69 (TPAPVRSPPP…PLETPPPPSP (63 aa)) has biased composition (pro residues). Low complexity-rich tracts occupy residues 116–126 (LSPMRLAAPRL) and 135–155 (TPTG…AAAG). The span at 193–204 (SPSPSPTPPSPL) shows a compositional bias: pro residues. Residues 205–221 (TPAAAPVVNNNSNNKNN) are compositionally biased toward low complexity. The helical transmembrane segment at 315–335 (LSVTLRLATAVLSLAAFSVIA) threads the bilayer. At 336–354 (SARTSGWAGDYYAHHLQYR) the chain is on the extracellular side. Residues 355–375 (YAVAVNVIVCAYSIAQSFGEI) traverse the membrane as a helical segment. Over 376–392 (RRLISPRFIFRSMSSYY) the chain is Cytoplasmic. The helical transmembrane segment at 393-413 (CSLFLDQALAYLLMSASSAAA) threads the bilayer. At 414–431 (SRNDLWVSRFGTDAFNRK) the chain is on the extracellular side. The helical transmembrane segment at 432 to 452 (ITSALWLSFIAFLMLALNALI) threads the bilayer. Residues 453-461 (STANLFSML) are Cytoplasmic-facing.

Belongs to the Casparian strip membrane proteins (CASP) family. Homodimer and heterodimers.

The protein localises to the cell membrane. The protein is CASP-like protein 4U1 of Sorghum bicolor (Sorghum).